The chain runs to 1249 residues: DNA-directed RNA polymerase subunit beta (1249 aa).

The protein belongs to the RNA polymerase beta chain family. In terms of assembly, the RNAP catalytic core consists of 2 alpha, 1 beta, 1 beta' and 1 omega subunit. When a sigma factor is associated with the core the holoenzyme is formed, which can initiate transcription.

The catalysed reaction is RNA(n) + a ribonucleoside 5'-triphosphate = RNA(n+1) + diphosphate. Functionally, DNA-dependent RNA polymerase catalyzes the transcription of DNA into RNA using the four ribonucleoside triphosphates as substrates. The sequence is that of DNA-directed RNA polymerase subunit beta from Clostridium botulinum (strain Eklund 17B / Type B).